Consider the following 283-residue polypeptide: ATP phosphoribosyltransferase (283 aa).

It belongs to the ATP phosphoribosyltransferase family. Long subfamily. Equilibrium between an active dimeric form, an inactive hexameric form and higher aggregates. Interconversion between the various forms is largely reversible and is influenced by the natural substrates and inhibitors of the enzyme. The cofactor is Mg(2+).

The protein localises to the cytoplasm. It catalyses the reaction 1-(5-phospho-beta-D-ribosyl)-ATP + diphosphate = 5-phospho-alpha-D-ribose 1-diphosphate + ATP. The protein operates within amino-acid biosynthesis; L-histidine biosynthesis; L-histidine from 5-phospho-alpha-D-ribose 1-diphosphate: step 1/9. Its activity is regulated as follows. Feedback inhibited by histidine. Its function is as follows. Catalyzes the condensation of ATP and 5-phosphoribose 1-diphosphate to form N'-(5'-phosphoribosyl)-ATP (PR-ATP). Has a crucial role in the pathway because the rate of histidine biosynthesis seems to be controlled primarily by regulation of HisG enzymatic activity. This chain is ATP phosphoribosyltransferase, found in Mycobacterium sp. (strain KMS).